Consider the following 705-residue polypeptide: Probable glutamate carboxypeptidase AMP1 (705 aa).

Residues 1–24 lie on the Cytoplasmic side of the membrane; it reads MSQPLTTRPTVTGISIIPFRQPPP. A helical; Signal-anchor for type II membrane protein transmembrane segment spans residues 25 to 42; that stretch reads LCSFLFVIVLFVATFYTL. The Extracellular segment spans residues 43-705; it reads HHPDAVTPPL…ASKALKGGFT (663 aa). Asn-74, Asn-137, and Asn-322 each carry an N-linked (GlcNAc...) asparagine glycan. The catalytic stretch occupies residues 255-548; sequence GVVGGEKLSL…GIWGLLGILL (294 aa). Residues His-356 and Asp-366 each coordinate Zn(2+). Residue Glu-403 is the Nucleophile of the active site. Residues Glu-404, Asp-432, and His-514 each contribute to the Zn(2+) site. N-linked (GlcNAc...) asparagine glycosylation occurs at Asn-676.

The protein belongs to the peptidase M28 family. M28B subfamily. Requires Zn(2+) as cofactor. Expressed in all plant parts. Highest levels in the bolt stem, inflorescence, root and silique. Low level in leaves.

The protein localises to the endoplasmic reticulum membrane. The catalysed reaction is Release of an unsubstituted, C-terminal glutamyl residue, typically from Ac-Asp-Glu or folylpoly-gamma-glutamates.. In terms of biological role, may modulate the level of one or more small signaling molecules that have a role in regulating meristem function. May play a role in balancing and restricting the meristem-promoting activity of auxin signaling. Involved in ethylene and giberellin (GA) signaling pathways or in a parallel pathway controlling cell and hypocotyl elongation and cellular organization. Involved in abscisic acid (ABA) signaling pathway. Plays a negative role in ABA-mediated seed germination and seedling development. Acts in association with LAMP1 to suppress ectopic stem cell niche formation in the shoot apical meristem (SAM) independently of cytokinin signaling pathway. Modulates responses to ABA, oxidative stress and abotic stress. Acts as a negative regulator of the ABA signaling pathway to modulate freezing and drought stress responses. Mediates carbon and amino acid metabolism. May be involved in the acquisition and/or maintenance of seed dormancy. Involved in the regulation of response to heat shock and plant defense. The sequence is that of Probable glutamate carboxypeptidase AMP1 from Arabidopsis thaliana (Mouse-ear cress).